A 188-amino-acid chain; its full sequence is Elongation factor P (188 aa).

It belongs to the elongation factor P family.

It localises to the cytoplasm. It participates in protein biosynthesis; polypeptide chain elongation. Its function is as follows. Involved in peptide bond synthesis. Stimulates efficient translation and peptide-bond synthesis on native or reconstituted 70S ribosomes in vitro. Probably functions indirectly by altering the affinity of the ribosome for aminoacyl-tRNA, thus increasing their reactivity as acceptors for peptidyl transferase. The sequence is that of Elongation factor P from Azotobacter vinelandii (strain DJ / ATCC BAA-1303).